The primary structure comprises 507 residues: Glycerol kinase 2 (507 aa).

Thr16 is an ADP binding site. Positions 16, 17, and 18 each coordinate ATP. Thr16 serves as a coordination point for sn-glycerol 3-phosphate. Arg20 contacts ADP. Sn-glycerol 3-phosphate is bound by residues Arg86, Glu87, Tyr138, and Asp248. The glycerol site is built by Arg86, Glu87, Tyr138, Asp248, and Gln249. ADP-binding residues include Thr270 and Gly314. ATP-binding residues include Thr270, Gly314, Gln318, and Gly415. 2 residues coordinate ADP: Gly415 and Asn419.

The protein belongs to the FGGY kinase family.

It catalyses the reaction glycerol + ATP = sn-glycerol 3-phosphate + ADP + H(+). It participates in polyol metabolism; glycerol degradation via glycerol kinase pathway; sn-glycerol 3-phosphate from glycerol: step 1/1. Its activity is regulated as follows. Inhibited by fructose 1,6-bisphosphate (FBP). In terms of biological role, key enzyme in the regulation of glycerol uptake and metabolism. Catalyzes the phosphorylation of glycerol to yield sn-glycerol 3-phosphate. The chain is Glycerol kinase 2 from Streptomyces avermitilis (strain ATCC 31267 / DSM 46492 / JCM 5070 / NBRC 14893 / NCIMB 12804 / NRRL 8165 / MA-4680).